A 147-amino-acid chain; its full sequence is uncharacterized protein (147 aa).

This sequence to M.pneumoniae MPN_465.

This is an uncharacterized protein from Mycoplasma pneumoniae (strain ATCC 29342 / M129 / Subtype 1) (Mycoplasmoides pneumoniae).